The primary structure comprises 487 residues: Virulence sensor histidine kinase PhoQ (487 aa).

At 1–16 (MNKFARHFLPLSLRVR) the chain is on the cytoplasmic side. Residues 17 to 37 (FLLATAGVVLVLSLAYGIVAL) traverse the membrane as a helical segment. Residues 38–193 (VGYSVSFDKT…ELKRSYMVWS (156 aa)) are Periplasmic-facing. Positions 151 and 152 each coordinate a divalent metal cation. A helical membrane pass occupies residues 194-214 (WFVYVLAANLLLVIPLLWIAA). The region spanning 215–266 (WWSLRPIEALAREVRELEDHHREMLNPETTRELTSLVRNLNQLLKSERERYN) is the HAMP domain. At 215 to 487 (WWSLRPIEAL…GRQHPTQKEE (273 aa)) the chain is on the cytoplasmic side. Residues 274–481 (DLTHSLKTPL…RMEVVFGRQH (208 aa)) form the Histidine kinase domain. A Phosphohistidine; by autocatalysis modification is found at H277. N386 provides a ligand contact to Mg(2+). ATP contacts are provided by residues 386 to 394 (NVLDNACKY), 416 to 421 (DDGPGI), and 435 to 447 (RADT…GVGL). Q443 is a binding site for Mg(2+).

Homodimer.

Its subcellular location is the cell inner membrane. The enzyme catalyses ATP + protein L-histidine = ADP + protein N-phospho-L-histidine.. Member of the two-component regulatory system PhoP/PhoQ which regulates the expression of genes involved in virulence and resistance to host defense antimicrobial peptides. In low periplasmic Mg(2+), PhoQ functions as a membrane-associated protein kinase that undergoes autophosphorylation and subsequently transfers the phosphate to PhoP, which results in the expression of PhoP-activated genes (PAG) and repression of PhoP-repressed genes (PRG). In high periplasmic Mg(2+), acts as a protein phosphatase that dephosphorylates phospho-PhoP, which results in the repression of PAG and may lead to expression of some PRG. Promotes intramacrophage survival of S.typhi. Is required to enhance bacterial resistance to bile in the human intestinal cells. The sequence is that of Virulence sensor histidine kinase PhoQ (phoQ) from Salmonella typhi.